The primary structure comprises 680 residues: Translation factor GUF1 homolog, chloroplastic (680 aa).

The N-terminal 51 residues, 1-51 (MAAKINSLAALVSLQASHHHHXSTPFYFSPFSPHLSTTLTSRRRSLRSAVV), are a transit peptide targeting the chloroplast. A tr-type G domain is found at 83-264 (SNIRNFCIIA…AIVKRIPPPC (182 aa)). Residues 92–99 (AHIDHGKS), 157–161 (DTPGH), and 211–214 (NKID) contribute to the GTP site.

Belongs to the TRAFAC class translation factor GTPase superfamily. Classic translation factor GTPase family. LepA subfamily.

It localises to the plastid. It is found in the chloroplast. The enzyme catalyses GTP + H2O = GDP + phosphate + H(+). Functionally, promotes chloroplast protein synthesis. May act as a fidelity factor of the translation reaction, by catalyzing a one-codon backward translocation of tRNAs on improperly translocated ribosomes. This chain is Translation factor GUF1 homolog, chloroplastic, found in Vitis vinifera (Grape).